The sequence spans 459 residues: Methylenetetrahydrofolate--tRNA-(uracil-5-)-methyltransferase TrmFO (459 aa).

15–20 (GAGLAG) is a binding site for FAD.

It belongs to the MnmG family. TrmFO subfamily. It depends on FAD as a cofactor.

It is found in the cytoplasm. It carries out the reaction uridine(54) in tRNA + (6R)-5,10-methylene-5,6,7,8-tetrahydrofolate + NADH + H(+) = 5-methyluridine(54) in tRNA + (6S)-5,6,7,8-tetrahydrofolate + NAD(+). The enzyme catalyses uridine(54) in tRNA + (6R)-5,10-methylene-5,6,7,8-tetrahydrofolate + NADPH + H(+) = 5-methyluridine(54) in tRNA + (6S)-5,6,7,8-tetrahydrofolate + NADP(+). Catalyzes the folate-dependent formation of 5-methyl-uridine at position 54 (M-5-U54) in all tRNAs. The polypeptide is Methylenetetrahydrofolate--tRNA-(uracil-5-)-methyltransferase TrmFO (Syntrophotalea carbinolica (strain DSM 2380 / NBRC 103641 / GraBd1) (Pelobacter carbinolicus)).